The primary structure comprises 266 residues: Large ribosomal subunit protein eL8 (266 aa).

Glycyl lysine isopeptide (Lys-Gly) (interchain with G-Cter in SUMO2) cross-links involve residues Lys11, Lys20, and Lys21. An N6-acetyllysine modification is found at Lys34. Lys48 participates in a covalent cross-link: Glycyl lysine isopeptide (Lys-Gly) (interchain with G-Cter in SUMO2). The residue at position 97 (Lys97) is an N6-acetyllysine; alternate. Lys97 is covalently cross-linked (Glycyl lysine isopeptide (Lys-Gly) (interchain with G-Cter in SUMO2); alternate). Lys125 is covalently cross-linked (Glycyl lysine isopeptide (Lys-Gly) (interchain with G-Cter in SUMO2)). Lys217 is modified (N6-acetyllysine). Lys245 is covalently cross-linked (Glycyl lysine isopeptide (Lys-Gly) (interchain with G-Cter in SUMO2)).

This sequence belongs to the eukaryotic ribosomal protein eL8 family. Component of the large ribosomal subunit. Interacts with CRY1. Interacts with DICER1, AGO2, TARBP2, MOV10 and EIF6; they form a large RNA-induced silencing complex (RISC).

The protein resides in the cytoplasm. Component of the large ribosomal subunit. The ribosome is a large ribonucleoprotein complex responsible for the synthesis of proteins in the cell. This Bos taurus (Bovine) protein is Large ribosomal subunit protein eL8 (RPL7A).